Here is a 295-residue protein sequence, read N- to C-terminus: Sulfotransferase 1A1 (295 aa).

48–53 (KSGTTW) is a 3'-phosphoadenylyl sulfate binding site. 106 to 108 (KTH) is a binding site for substrate. His108 functions as the Proton acceptor in the catalytic mechanism. 3'-phosphoadenylyl sulfate is bound by residues Arg130, Ser138, Tyr193, 227 to 232 (TSFKEM), and 255 to 259 (FMRKG). Ser138 bears the Phosphoserine mark.

It belongs to the sulfotransferase 1 family. Homodimer. In terms of tissue distribution, liver, lung, adrenal, brain, platelets and skin.

It localises to the cytoplasm. The catalysed reaction is a phenol + 3'-phosphoadenylyl sulfate = an aryl sulfate + adenosine 3',5'-bisphosphate + H(+). It catalyses the reaction 17beta-estradiol + 3'-phosphoadenylyl sulfate = 17beta-estradiol 3-sulfate + adenosine 3',5'-bisphosphate + H(+). The enzyme catalyses 4-ethylphenol + 3'-phosphoadenylyl sulfate = 4-ethylphenyl sulfate + adenosine 3',5'-bisphosphate + H(+). It carries out the reaction 4-nitrophenol + 3'-phosphoadenylyl sulfate = 4-nitrophenyl sulfate + adenosine 3',5'-bisphosphate. The catalysed reaction is dopamine + 3'-phosphoadenylyl sulfate = dopamine 3-O-sulfate + adenosine 3',5'-bisphosphate + H(+). It catalyses the reaction dopamine + 3'-phosphoadenylyl sulfate = dopamine 4-O-sulfate + adenosine 3',5'-bisphosphate + H(+). The enzyme catalyses 3,3',5-triiodo-L-thyronine + 3'-phosphoadenylyl sulfate = 3,3',5-triiodo-L-thyronine sulfate + adenosine 3',5'-bisphosphate + H(+). It carries out the reaction 3,3',5'-triiodo-L-thyronine + 3'-phosphoadenylyl sulfate = 3,3',5'-triiodo-L-thyronine sulfate + adenosine 3',5'-bisphosphate + H(+). The catalysed reaction is 3,3'-diiodo-L-thyronine + 3'-phosphoadenylyl sulfate = 3,3'-diiodo-L-thyronine sulfate + adenosine 3',5'-bisphosphate + H(+). It catalyses the reaction L-thyroxine + 3'-phosphoadenylyl sulfate = L-thyroxine sulfate + adenosine 3',5'-bisphosphate + H(+). Functionally, sulfotransferase that utilizes 3'-phospho-5'-adenylyl sulfate (PAPS) as sulfonate donor to catalyze the sulfate conjugation of a wide variety of acceptor molecules bearing a hydroxyl or an amine group. Sulfonation increases the water solubility of most compounds, and therefore their renal excretion, but it can also result in bioactivation to form active metabolites. Displays broad substrate specificity for small phenolic compounds. Plays an important role in the sulfonation of endogenous molecules such as steroid hormones. Mediates the sulfate conjugation of a variety of xenobiotics, including the drugs acetaminophen and minoxidil. Mediates also the metabolic activation of carcinogenic N-hydroxyarylamines leading to highly reactive intermediates capable of forming DNA adducts, potentially resulting in mutagenesis. May play a role in gut microbiota-host metabolic interaction. O-sulfonates 4-ethylphenol (4-EP), a dietary tyrosine-derived metabolite produced by gut bacteria. The product 4-EPS crosses the blood-brain barrier and may negatively regulate oligodendrocyte maturation and myelination, affecting the functional connectivity of different brain regions associated with the limbic system. Catalyzes the sulfate conjugation of dopamine. Catalyzes the sulfation of T4 (L-thyroxine/3,5,3',5'-tetraiodothyronine), T3 (3,5,3'-triiodothyronine), rT3 (3,3',5'-triiodothyronine) and 3,3'-T2 (3,3'-diiodothyronine), with a substrate preference of 3,3'-T2 &gt; rT3 &gt; T3 &gt; T4. This is Sulfotransferase 1A1 (SULT1A1) from Homo sapiens (Human).